A 310-amino-acid polypeptide reads, in one-letter code: Aspartate carbamoyltransferase catalytic subunit (310 aa).

2 residues coordinate carbamoyl phosphate: arginine 58 and threonine 59. Lysine 86 is a binding site for L-aspartate. Arginine 108, histidine 137, and glutamine 140 together coordinate carbamoyl phosphate. L-aspartate-binding residues include arginine 170 and arginine 225. Glycine 264 and proline 265 together coordinate carbamoyl phosphate.

It belongs to the aspartate/ornithine carbamoyltransferase superfamily. ATCase family. Heterododecamer (2C3:3R2) of six catalytic PyrB chains organized as two trimers (C3), and six regulatory PyrI chains organized as three dimers (R2).

The enzyme catalyses carbamoyl phosphate + L-aspartate = N-carbamoyl-L-aspartate + phosphate + H(+). The protein operates within pyrimidine metabolism; UMP biosynthesis via de novo pathway; (S)-dihydroorotate from bicarbonate: step 2/3. Functionally, catalyzes the condensation of carbamoyl phosphate and aspartate to form carbamoyl aspartate and inorganic phosphate, the committed step in the de novo pyrimidine nucleotide biosynthesis pathway. This is Aspartate carbamoyltransferase catalytic subunit from Coxiella burnetii (strain CbuK_Q154) (Coxiella burnetii (strain Q154)).